The primary structure comprises 508 residues: Transcription termination factor MTERF4, chloroplastic (508 aa).

The N-terminal 79 residues, 1 to 79, are a transit peptide targeting the chloroplast; the sequence is MMKSLFLFSA…PSLLDMERGR (79 aa). Residues 28-49 show a composition bias toward low complexity; sequence RLTASASTSASSPPRAGCSRGP. Disordered regions lie at residues 28–69 and 475–508; these read RLTA…LYAR and FDTN…EFIE. Over residues 484–508 the composition is skewed to acidic residues; it reads VEDEVEDEDLDEDSDYDSTDDEFIE.

This sequence belongs to the mTERF family.

The protein localises to the plastid. Its subcellular location is the chloroplast stroma. In terms of biological role, transcription termination factor required for processing and steady-state levels of plastid transcripts. Required for splicing of the chloroplastic group II intron. Required for the accumulation of 16S and 23S ribosomes. The protein is Transcription termination factor MTERF4, chloroplastic of Oryza sativa subsp. japonica (Rice).